The sequence spans 387 residues: Low specificity L-threonine aldolase (387 aa).

Position 213 is an N6-(pyridoxal phosphate)lysine (lysine 213). Lysine 228 participates in a covalent cross-link: Glycyl lysine isopeptide (Lys-Gly) (interchain with G-Cter in ubiquitin). Phosphoserine occurs at positions 367 and 369. A Phosphothreonine modification is found at threonine 370.

This sequence belongs to the threonine aldolase family. Homotetramer. The cofactor is pyridoxal 5'-phosphate.

The enzyme catalyses L-threonine = acetaldehyde + glycine. The catalysed reaction is L-allo-threonine = acetaldehyde + glycine. Its pathway is amino-acid biosynthesis; glycine biosynthesis; glycine from L-allo-threonine: step 1/1. It functions in the pathway amino-acid degradation; L-threonine degradation via aldolase pathway; acetaldehyde and glycine from L-threonine: step 1/1. Functionally, catalyzes the cleavage of L-allo-threonine and L-threonine to glycine and acetaldehyde. This Saccharomyces cerevisiae (strain ATCC 204508 / S288c) (Baker's yeast) protein is Low specificity L-threonine aldolase (GLY1).